We begin with the raw amino-acid sequence, 147 residues long: D(1B) dopamine receptor (147 aa).

A helical transmembrane segment spans residues 1 to 12 (SILISFPVQLNW). Topologically, residues 13–55 (HRDQAGSWGGLDLTNNLANWTPWEEDVWEPDVRAENCDSSLNR) are extracellular. Residue Asn-54 is glycosylated (N-linked (GlcNAc...) asparagine). A helical membrane pass occupies residues 56–78 (TYAISSSLVSFYIPVAIMIVTYT). At 79 to 128 (RIYRIAQVQIRRISSLERAAEHAQSCRSSAACAPDTSLRASIKKETKVLK) the chain is on the cytoplasmic side. Residues 129 to 147 (TLSVIMGVFVCCWLPFFIL) traverse the membrane as a helical segment.

This sequence belongs to the G-protein coupled receptor 1 family.

It localises to the cell membrane. Dopamine receptor whose activity is mediated by G proteins which activate adenylyl cyclase. The protein is D(1B) dopamine receptor (DRD5) of Macaca mulatta (Rhesus macaque).